Consider the following 134-residue polypeptide: Small ribosomal subunit protein uS8c (134 aa).

Belongs to the universal ribosomal protein uS8 family. Part of the 30S ribosomal subunit.

It localises to the plastid. The protein localises to the chloroplast. Functionally, one of the primary rRNA binding proteins, it binds directly to 16S rRNA central domain where it helps coordinate assembly of the platform of the 30S subunit. The protein is Small ribosomal subunit protein uS8c (rps8) of Lactuca sativa (Garden lettuce).